Here is a 145-residue protein sequence, read N- to C-terminus: AP-2 complex subunit sigma (145 aa).

This sequence belongs to the adaptor complexes small subunit family. In terms of assembly, adaptor protein complex 2 (AP-2) is a heterotetramer composed of two large adaptins (alpha-type subunit apl3 and beta-type subunit apl1), a medium chain (mu-type subunit apm4) and a small adaptin (sigma-type subunit aps2).

It localises to the cell membrane. Its subcellular location is the membrane. The protein localises to the coated pit. Component of the adaptor complexes which link clathrin to receptors in coated vesicles. Clathrin-associated protein complexes are believed to interact with the cytoplasmic tails of membrane proteins, leading to their selection and concentration. The protein is AP-2 complex subunit sigma (aps2) of Aspergillus fumigatus (strain ATCC MYA-4609 / CBS 101355 / FGSC A1100 / Af293) (Neosartorya fumigata).